Here is a 733-residue protein sequence, read N- to C-terminus: Zinc finger protein indra (733 aa).

The ZAD domain maps to V17–Q91. Zn(2+) contacts are provided by C19, C22, C64, and C67. Residues E90 to E100 show a composition bias toward basic and acidic residues. The segment at E90 to T121 is disordered. S109, S153, and S176 each carry phosphoserine. Residues T180 and T188 each carry the phosphothreonine modification. C2H2-type zinc fingers lie at residues F228–H251 and Y259–H282. Residues T285–E316 show a composition bias toward basic and acidic residues. The segment at T285–T336 is disordered. 2 consecutive C2H2-type zinc fingers follow at residues F416 to H439 and F447 to H469. Disordered stretches follow at residues I499–R525 and A540–V622. Residues S592–A602 show a composition bias toward polar residues. Residues S600, S642, and S646 each carry the phosphoserine modification. Residue T647 is modified to Phosphothreonine. 2 C2H2-type zinc fingers span residues L653–H676 and L708–H733. Residue S654 is modified to Phosphoserine.

The protein belongs to the krueppel C2H2-type zinc-finger protein family.

The protein localises to the nucleus. Its subcellular location is the nucleolus. Functionally, required for rDNA copy number maintenance and non-random sister chromatid segregation (NRSS) following unequal sister chromatid exchange. Binds ribosomal DNA (rDNA) preferentially binding to intergenic spacers (IGS) regions on both X and Y chromosomes. Essential for NRSS, a mechanism which contributes to the recovery and maintenance of inherently unstable rDNA copy numbers so that the integrity of the germline genome is upheld over generations and germline immortality is sustained. May be involved in transcriptional regulation. This is Zinc finger protein indra from Drosophila melanogaster (Fruit fly).